The primary structure comprises 166 residues: UPF0304 protein VIBHAR_01542 (166 aa).

Belongs to the UPF0304 family.

The chain is UPF0304 protein VIBHAR_01542 from Vibrio campbellii (strain ATCC BAA-1116).